Reading from the N-terminus, the 256-residue chain is Coiled-coil domain-containing protein 90B, mitochondrial (256 aa).

The N-terminal 42 residues, 1–42, are a transit peptide targeting the mitochondrion; sequence MRSRWIWRFLRPDGGGIRWTSTPHGRLSPALRRGFLTTTTKS. A coiled-coil region spans residues 129–167; that stretch reads LEKSEFANLRAENEKMKIELDQVKQQLTNETSRIRADNK. The helical transmembrane segment at 231–253 threads the bilayer; it reads TIRYLAASVFTCLAIALGFYRFW.

This sequence belongs to the CCDC90 family. As to quaternary structure, interacts with MCU.

It localises to the mitochondrion membrane. In Mus musculus (Mouse), this protein is Coiled-coil domain-containing protein 90B, mitochondrial (Ccdc90b).